Consider the following 357-residue polypeptide: Heat-inducible transcription repressor HrcA (357 aa).

This sequence belongs to the HrcA family.

Its function is as follows. Negative regulator of class I heat shock genes (grpE-dnaK-dnaJ and groELS operons). Prevents heat-shock induction of these operons. This is Heat-inducible transcription repressor HrcA from Chlorobium phaeobacteroides (strain DSM 266 / SMG 266 / 2430).